The sequence spans 197 residues: Holliday junction branch migration complex subunit RuvA (197 aa).

Positions 1 to 62 (MIEFVRGEVA…EDQEVLFGFR (62 aa)) are domain I. Residues 63–141 (SRRERALFTK…ELAPDYIPSE (79 aa)) form a domain II region. The interval 141–145 (EGLFA) is flexible linker. Residues 146–197 (QGNAELNEACEALTALGYSEREVEKVKKALQGEVLSTDQYVKRALQLLLNVR) are domain III.

The protein belongs to the RuvA family. As to quaternary structure, homotetramer. Forms an RuvA(8)-RuvB(12)-Holliday junction (HJ) complex. HJ DNA is sandwiched between 2 RuvA tetramers; dsDNA enters through RuvA and exits via RuvB. An RuvB hexamer assembles on each DNA strand where it exits the tetramer. Each RuvB hexamer is contacted by two RuvA subunits (via domain III) on 2 adjacent RuvB subunits; this complex drives branch migration. In the full resolvosome a probable DNA-RuvA(4)-RuvB(12)-RuvC(2) complex forms which resolves the HJ.

It localises to the cytoplasm. Its function is as follows. The RuvA-RuvB-RuvC complex processes Holliday junction (HJ) DNA during genetic recombination and DNA repair, while the RuvA-RuvB complex plays an important role in the rescue of blocked DNA replication forks via replication fork reversal (RFR). RuvA specifically binds to HJ cruciform DNA, conferring on it an open structure. The RuvB hexamer acts as an ATP-dependent pump, pulling dsDNA into and through the RuvAB complex. HJ branch migration allows RuvC to scan DNA until it finds its consensus sequence, where it cleaves and resolves the cruciform DNA. The polypeptide is Holliday junction branch migration complex subunit RuvA (Exiguobacterium sibiricum (strain DSM 17290 / CCUG 55495 / CIP 109462 / JCM 13490 / 255-15)).